Reading from the N-terminus, the 106-residue chain is ATP-dependent Clp protease adapter protein ClpS (106 aa).

Residues 1–22 form a disordered region; it reads MTDEPNQDDPQGPEVEAAKPSL.

Belongs to the ClpS family. As to quaternary structure, binds to the N-terminal domain of the chaperone ClpA.

Functionally, involved in the modulation of the specificity of the ClpAP-mediated ATP-dependent protein degradation. This chain is ATP-dependent Clp protease adapter protein ClpS, found in Halorhodospira halophila (strain DSM 244 / SL1) (Ectothiorhodospira halophila (strain DSM 244 / SL1)).